Here is a 353-residue protein sequence, read N- to C-terminus: Putrescine N-methyltransferase 2 (353 aa).

The segment at 15-50 (KSGAIPMNGHHNGTSKHQNGHKNGTSEQQNGTISLD) is disordered. Polar residues predominate over residues 25–50 (HNGTSKHQNGHKNGTSEQQNGTISLD). A PABS domain is found at 64–301 (PGWFSEFSAL…GVIGYMLCST (238 aa)). S-adenosyl-L-methionine contacts are provided by residues glutamine 95, glutamate 170, and 201 to 202 (DG). Aspartate 220 functions as the Proton acceptor in the catalytic mechanism. Tyrosine 289 lines the S-adenosyl-L-methionine pocket.

Belongs to the class I-like SAM-binding methyltransferase superfamily. Putrescine methyltransferase family. Predominantly expressed in roots.

It catalyses the reaction putrescine + S-adenosyl-L-methionine = N-methylputrescine + S-adenosyl-L-homocysteine + H(+). The protein operates within alkaloid biosynthesis; nicotine biosynthesis. Involved in the biosynthesis of pyridine alkaloid natural products, leading mainly to the production of anabasine, anatabine, nicotine and nornicotine, effective deterrents against herbivores with antiparasitic and pesticide properties (neurotoxins); nornicotine serves as the precursor in the synthesis of the carcinogen compound N'-nitrosonornicotine (NNN). Methyltransferase that mediates the conversion of putrescine to N-methylputrescine. Promotes leaves ripening. The protein is Putrescine N-methyltransferase 2 of Nicotiana tabacum (Common tobacco).